The chain runs to 309 residues: General transcription factor IIH subunit 3 (309 aa).

The segment at 269 to 286 adopts a C4-type zinc-finger fold; the sequence is CSVCLSIFCNFSPICTTC.

It belongs to the TFB4 family. In terms of assembly, part of a TFIID-containing RNA polymerase II pre-initiation complex that is composed of TBP and at least GTF2A1, GTF2A2, GTF2E1, GTF2E2, GTF2F1, GTF2H2, GTF2H3, GTF2H4, GTF2H5, GTF2B, TCEA1, ERCC2, ERCC3, TAF1, TAF2, TAF3, TAF4, TAF5, TAF6, TAF7, TAF8, TAF9, TAF10, TAF11, TAF12 and TAF13. Component of the 7-subunit TFIIH core complex composed of XPB/ERCC3, XPD/ERCC2, GTF2H1, GTF2H2, GTF2H3, GTF2H4 and GTF2H5, which is active in NER. The core complex associates with the 3-subunit CDK-activating kinase (CAK) module composed of CCNH/cyclin H, CDK7 and MNAT1 to form the 10-subunit holoenzyme (holo-TFIIH) active in transcription. Interacts with RARA; the interaction requires prior phosphorylation of RARA on 'Ser-369' which then enhances interaction of RARA with CDK7.

The protein resides in the nucleus. In terms of biological role, component of the general transcription and DNA repair factor IIH (TFIIH) core complex, which is involved in general and transcription-coupled nucleotide excision repair (NER) of damaged DNA and, when complexed to CAK, in RNA transcription by RNA polymerase II. In NER, TFIIH acts by opening DNA around the lesion to allow the excision of the damaged oligonucleotide and its replacement by a new DNA fragment. In transcription, TFIIH has an essential role in transcription initiation. When the pre-initiation complex (PIC) has been established, TFIIH is required for promoter opening and promoter escape. Phosphorylation of the C-terminal tail (CTD) of the largest subunit of RNA polymerase II by the kinase module CAK controls the initiation of transcription. This Rattus norvegicus (Rat) protein is General transcription factor IIH subunit 3 (Gtf2h3).